The chain runs to 156 residues: Large ribosomal subunit protein uL15 (156 aa).

Positions 29–48 (CGKGKTSGRGHKGQKARSGV) are disordered. Positions 34–43 (TSGRGHKGQK) are enriched in basic residues.

The protein belongs to the universal ribosomal protein uL15 family. Part of the 50S ribosomal subunit.

Its function is as follows. Binds to the 23S rRNA. The chain is Large ribosomal subunit protein uL15 from Ehrlichia chaffeensis (strain ATCC CRL-10679 / Arkansas).